The sequence spans 223 residues: Coiled-coil domain-containing protein 124 (223 aa).

Residues 1 to 126 (MPKKFQGENT…AEKAKSHLEV (126 aa)) form a disordered region. Basic and acidic residues-rich tracts occupy residues 18 to 74 (RRAE…QRLL) and 99 to 126 (QIED…HLEV). Residues 44–82 (KHVMRKEQRKEEKEKRRLDQLERKKETQRLLEEEDSKLK) adopt a coiled-coil conformation. Phosphoserine occurs at positions 141 and 194. The disordered stretch occupies residues 204–223 (WLRSPDNPMNQRAVPFNAPK).

This sequence belongs to the CCDC124 family. Associates with translationally inactive ribosomes in the nonrotated state. Interacts with RASGEF1B.

It is found in the cytoplasm. It localises to the cytoskeleton. The protein resides in the microtubule organizing center. Its subcellular location is the centrosome. The protein localises to the midbody. Functionally, ribosome-binding protein involved in ribosome hibernation: associates with translationally inactive ribosomes and stabilizes the nonrotated conformation of the 80S ribosome, thereby promoting ribosome preservation and storage. Also required for proper progression of late cytokinetic stages. The polypeptide is Coiled-coil domain-containing protein 124 (CCDC124) (Pongo abelii (Sumatran orangutan)).